Reading from the N-terminus, the 728-residue chain is Catalase-peroxidase 1 (728 aa).

The segment at residues 91-218 (WHSAGTYRTA…LAAVQMGLIY (128 aa)) is a cross-link (tryptophyl-tyrosyl-methioninium (Trp-Tyr) (with M-244)). Histidine 92 serves as the catalytic Proton acceptor. Residues 218 to 244 (YVNPEGPDGNPDPVAAAHDIRETFARM) constitute a cross-link (tryptophyl-tyrosyl-methioninium (Tyr-Met) (with W-91)). Residue histidine 259 participates in heme b binding.

This sequence belongs to the peroxidase family. Peroxidase/catalase subfamily. Homodimer or homotetramer. Heme b is required as a cofactor. Formation of the three residue Trp-Tyr-Met cross-link is important for the catalase, but not the peroxidase activity of the enzyme.

The enzyme catalyses H2O2 + AH2 = A + 2 H2O. It carries out the reaction 2 H2O2 = O2 + 2 H2O. Functionally, bifunctional enzyme with both catalase and broad-spectrum peroxidase activity. The polypeptide is Catalase-peroxidase 1 (Burkholderia cenocepacia (strain HI2424)).